The chain runs to 737 residues: Palmitoyltransferase akr1 (737 aa).

Residues 1–60 (MSSGDPPSGLQASGSNSSAALGLSPPSAPSGKSAATPPKVATDDASVELSSMKSERSPAK) form a disordered region. The Cytoplasmic segment spans residues 1–314 (MSSGDPPSGL…YVRDKAIMSK (314 aa)). Low complexity predominate over residues 7–38 (PSGLQASGSNSSAALGLSPPSAPSGKSAATPP). ANK repeat units follow at residues 97–126 (EGIT…DVNA), 131–160 (SVAT…DPLL), 164–193 (QGYN…PVDV), 197–226 (QGHT…NPNA), and 230–259 (GGLA…DRFA). The next 2 helical transmembrane spans lie at 315-335 (FFFF…SNMV) and 336-356 (VYFA…VAKK). The Cytoplasmic segment spans residues 357-372 (AASQGPSEFRIIQKTP). The helical transmembrane segment at 373–393 (FLAGVFAGSLFWVFVRYVLYV) threads the bilayer. The Lumenal segment spans residues 394 to 402 (LPATYSTNP). A helical transmembrane segment spans residues 403-423 (FLNLGFVVFFSLTTYFYFYSM). Over 424–500 (VADPGYVPKL…NCVGVNNLRQ (77 aa)) the chain is Cytoplasmic. A DHHC domain is found at 456 to 506 (NFCVYCMIRRPLRSKHCRRCSRCVAKHDHHCPWIDNCVGVNNLRQFVLYIL). Residue C486 is the S-palmitoyl cysteine intermediate of the active site. The chain crosses the membrane as a helical span at residues 501 to 521 (FVLYILCLEIGIILFLHLTFN). Over 522–549 (YINGLPAPAEPICNILNDQICSFVLRDT) the chain is Lumenal. The helical transmembrane segment at 550 to 570 (FTLLLDVWIAIQLVWVTMLGV) threads the bilayer. The Cytoplasmic segment spans residues 571–737 (VQLVQVSRNQ…VAYDEAADIV (167 aa)).

It belongs to the DHHC palmitoyltransferase family. AKR/ZDHHC17 subfamily.

It localises to the early endosome membrane. The protein localises to the golgi apparatus membrane. It catalyses the reaction L-cysteinyl-[protein] + hexadecanoyl-CoA = S-hexadecanoyl-L-cysteinyl-[protein] + CoA. Its function is as follows. Palmitoyltransferase specific for casein kinase 1. The polypeptide is Palmitoyltransferase akr1 (akr1) (Emericella nidulans (strain FGSC A4 / ATCC 38163 / CBS 112.46 / NRRL 194 / M139) (Aspergillus nidulans)).